The sequence spans 101 residues: MAKLALIEREKKRARLAQKYAPKRAELKAIIDDASKSDEERYAARLELQQLPRNANPTRKRNRCAITGRPRGTFRKFGLARNKIREIAFRGEIPGLTKASW.

The protein belongs to the universal ribosomal protein uS14 family. Part of the 30S ribosomal subunit. Contacts proteins S3 and S10.

Functionally, binds 16S rRNA, required for the assembly of 30S particles and may also be responsible for determining the conformation of the 16S rRNA at the A site. This Burkholderia mallei (strain NCTC 10247) protein is Small ribosomal subunit protein uS14.